The following is a 1020-amino-acid chain: Protein translocase subunit SecA (1020 aa).

ATP contacts are provided by residues Gln143, 161–165 (GEGKT), and Asp661. A disordered region spans residues 974–1020 (SVYNASPGAENEAPLQRPVTADSKPGRNDPCPCGSGKKYKNCHGQQP). 4 residues coordinate Zn(2+): Cys1004, Cys1006, Cys1015, and His1016.

Belongs to the SecA family. Monomer and homodimer. Part of the essential Sec protein translocation apparatus which comprises SecA, SecYEG and auxiliary proteins SecDF. Other proteins may also be involved. Requires Zn(2+) as cofactor.

The protein resides in the cell inner membrane. Its subcellular location is the cytoplasm. It carries out the reaction ATP + H2O + cellular proteinSide 1 = ADP + phosphate + cellular proteinSide 2.. Its function is as follows. Part of the Sec protein translocase complex. Interacts with the SecYEG preprotein conducting channel. Has a central role in coupling the hydrolysis of ATP to the transfer of proteins into and across the cell membrane, serving as an ATP-driven molecular motor driving the stepwise translocation of polypeptide chains across the membrane. The chain is Protein translocase subunit SecA from Chlorobium phaeovibrioides (strain DSM 265 / 1930) (Prosthecochloris vibrioformis (strain DSM 265)).